Here is a 353-residue protein sequence, read N- to C-terminus: 2-oxoglutarate-dependent dioxygenase phqC (353 aa).

The 117-residue stretch at Cys199–Ala315 folds into the Fe2OG dioxygenase domain. Positions 227, 229, and 287 each coordinate Fe cation. Arg302 serves as a coordination point for 2-oxoglutarate.

Belongs to the iron/ascorbate-dependent oxidoreductase family. Fe(2+) is required as a cofactor.

It participates in alkaloid biosynthesis. In terms of biological role, 2-oxoglutarate-dependent dioxygenase; part of the gene cluster that mediates the biosynthesis of paraherquamide, a fungal indole alkaloid that belongs to a family of natural products containing a characteristic bicyclo[2.2.2]diazaoctane core. The first steps in the biosynthesis of paraherquamide is the production of the beta-methyl-proline precursor from L-isoleucine. They require oxidation of a terminally hydroxylated L-isoleucine to the corresponding aldehyde by enzymes which have still to be identified. Spontaneous cyclization and dehydration would yield the 4-methyl pyrolline-5-carboxylic acid, which is then reduced by the pyrroline-5-carboxylate reductase phqD leading to the beta-methyl-proline precursor. The next step of paraherquamide biosynthesis involves coupling of beta-methyl-proline and L-tryptophan by the bimodular NRPS phqB, to produce a monooxopiperazine intermediate. The reductase (R) domain of phqB utilizes NADPH for hydride transfer to reduce the thioester bond of the T domain-tethered linear dipeptide to a hemithioaminal intermediate, which spontaneously cleaves the C-S bond to release the aldehyde product. This compound undergoes spontaneous cyclization and dehydration to give a dienamine which is reverse prenylated at C-2 by the reverse prenyltransferase phqJ. The other prenyltransferase present in the cluster, phqI may be a redundant gene in the pathway. During biosynthetic assembly, the key step to produce the polycyclic core is catalyzed by the bifunctional reductase and intramolecular [4+2] Diels-Alderase, phqE, resulting in formation of the [2.2.2] diazaoctane intermediate preparaherquamide. Following formation of preparaherquamide, an indole 2,3-epoxidation-initiated pinacol-like rearrangement is catalyzed by the phqK FAD-dependent monooxygenase. The prenyltransferase phqA, the cytochrome P450 monooxygenase phqL, and the FAD-linked oxidoreductase phqH (or the cytochrome P450 monooxygenase phqM), are proposed to be involved in the formation of the pyran ring. The FAD-dependent monooxygenase phqK is likely responsible for generation of the spiro-oxindole, and the N-methylation is likely mediated by the phqN methyltransferase leading to the isolable natural product paraherquamide F. However, the order of these biosynthetic steps has still to be determined. In late-stage paraherquamide biosynthesis, the third P450 monooxygenase, phqO, is probably responsible for the C-14 hydroxylation, transforming paraherquamide F to paraherquamide G, and paraherquamide E to the final product paraherquamide A. The expansion from the 6-membered ring pyran (in paraherquamides F and G) to the 7-membered dioxepin ring (in paraherquamides A and E) represents a poorly understood but intriguing process that probably involves the 2-oxoglutarate-dependent dioxygenase phqC. Finally, the remaining members of the paraherquamide cluster, including phqI as well as phqM (or phqH), do not have a clearly prescribed role and appear to be redundant. The polypeptide is 2-oxoglutarate-dependent dioxygenase phqC (Penicillium fellutanum).